The chain runs to 481 residues: Phosphatidylinositol 4-kinase type 2-beta (481 aa).

Residues 1–11 are compositionally biased toward basic and acidic residues; sequence MEDPSEPDRLA. A disordered region spans residues 1–82; the sequence is MEDPSEPDRL…VSRSSSAELD (82 aa). 3 positions are modified to phosphoserine: Ser12, Ser17, and Ser45. Residues 53–64 show a composition bias toward acidic residues; it reads AGEEGEAGDEEL. One can recognise a PI3K/PI4K catalytic domain in the interval 120–451; sequence GIFPERISQG…VQIPCVIVER (332 aa). A G-loop region spans residues 126–132; the sequence is ISQGSSG. Ser133 and Lys148 together coordinate ATP. The tract at residues 153–155 is important for substrate binding; sequence EPY. The segment at 161–174 is important for interaction with membranes; it reads KWTKYVHKVCCPCC. Residues 257–260 and 271–272 contribute to the ATP site; these read QLFV and RK. The segment at 264 to 272 is important for interaction with membranes; it reads KEAEYWLRK. A catalytic loop region spans residues 301-309; it reads RNTDRGNDN. The interval 342–362 is activation loop; sequence AIDNGLAFPFKHPDEWRAYPF. Asp344 is an ATP binding site. The segment at 357 to 366 is important for interaction with membranes; that stretch reads WRAYPFHWAW.

Belongs to the PI3/PI4-kinase family. Type II PI4K subfamily. Widely expressed.

It is found in the cytoplasm. Its subcellular location is the cytosol. The protein localises to the golgi apparatus membrane. It localises to the endoplasmic reticulum membrane. The protein resides in the cell membrane. It is found in the early endosome membrane. It carries out the reaction a 1,2-diacyl-sn-glycero-3-phospho-(1D-myo-inositol) + ATP = a 1,2-diacyl-sn-glycero-3-phospho-(1D-myo-inositol 4-phosphate) + ADP + H(+). With respect to regulation, inhibited by phenylarsine oxide and adenosine. Activation through membrane association is stimulated by active RAC1. Together with PI4K2A and the type III PI4Ks (PIK4CA and PIK4CB) it contributes to the overall PI4-kinase activity of the cell. This contribution may be especially significant in plasma membrane, endosomal and Golgi compartments. The phosphorylation of phosphatidylinositol (PI) to PI4P is the first committed step in the generation of phosphatidylinositol 4,5-bisphosphate (PIP2), a precursor of the second messenger inositol 1,4,5-trisphosphate (InsP3). Contributes to the production of InsP3 in stimulated cells and is likely to be involved in the regulation of vesicular trafficking. The protein is Phosphatidylinositol 4-kinase type 2-beta (PI4K2B) of Homo sapiens (Human).